Reading from the N-terminus, the 325-residue chain is MATVIDTLKARGSEDRAARHPEKQNRPDTPVLRKPEWLRVRAPGSGQYNETKGIVREHKLHTVCEEAACPNIGECWSQKHATMMIMGEICTRACAFCNVTTGLPTQLDPDEPRRVAEAVAKMGLKHVVITSVDRDDLLDGGARHFAEVVTSIRAAAPGTTIEILTPDFLRKDGAENVVIDSKPDVFNHNLETVPRLYLKIRPGARYYNSLRLLDRVKQRDPSQFTKSGLMVGLGETKEEVMQVMDDMRSAGVDFITIGQYLQPTRKHAAIDRFVTPEEFKAYEAIARAKGFLMVSSSPLTRSSHHAGEDFAKLQAARRALDARTA.

The tract at residues 1 to 33 is disordered; sequence MATVIDTLKARGSEDRAARHPEKQNRPDTPVLR. The span at 8–33 shows a compositional bias: basic and acidic residues; that stretch reads LKARGSEDRAARHPEKQNRPDTPVLR. Residues Cys64, Cys69, Cys75, Cys90, Cys94, Cys97, and Ser303 each contribute to the [4Fe-4S] cluster site. In terms of domain architecture, Radical SAM core spans 76-292; the sequence is WSQKHATMMI…EAIARAKGFL (217 aa).

The protein belongs to the radical SAM superfamily. Lipoyl synthase family. [4Fe-4S] cluster is required as a cofactor.

Its subcellular location is the cytoplasm. It carries out the reaction [[Fe-S] cluster scaffold protein carrying a second [4Fe-4S](2+) cluster] + N(6)-octanoyl-L-lysyl-[protein] + 2 oxidized [2Fe-2S]-[ferredoxin] + 2 S-adenosyl-L-methionine + 4 H(+) = [[Fe-S] cluster scaffold protein] + N(6)-[(R)-dihydrolipoyl]-L-lysyl-[protein] + 4 Fe(3+) + 2 hydrogen sulfide + 2 5'-deoxyadenosine + 2 L-methionine + 2 reduced [2Fe-2S]-[ferredoxin]. It participates in protein modification; protein lipoylation via endogenous pathway; protein N(6)-(lipoyl)lysine from octanoyl-[acyl-carrier-protein]: step 2/2. Functionally, catalyzes the radical-mediated insertion of two sulfur atoms into the C-6 and C-8 positions of the octanoyl moiety bound to the lipoyl domains of lipoate-dependent enzymes, thereby converting the octanoylated domains into lipoylated derivatives. In Caulobacter vibrioides (strain ATCC 19089 / CIP 103742 / CB 15) (Caulobacter crescentus), this protein is Lipoyl synthase.